The following is a 258-amino-acid chain: Acyl-[acyl-carrier-protein]--UDP-N-acetylglucosamine O-acyltransferase (258 aa).

This sequence belongs to the transferase hexapeptide repeat family. LpxA subfamily. As to quaternary structure, homotrimer.

The protein resides in the cytoplasm. It carries out the reaction a (3R)-hydroxyacyl-[ACP] + UDP-N-acetyl-alpha-D-glucosamine = a UDP-3-O-[(3R)-3-hydroxyacyl]-N-acetyl-alpha-D-glucosamine + holo-[ACP]. The protein operates within glycolipid biosynthesis; lipid IV(A) biosynthesis; lipid IV(A) from (3R)-3-hydroxytetradecanoyl-[acyl-carrier-protein] and UDP-N-acetyl-alpha-D-glucosamine: step 1/6. In terms of biological role, involved in the biosynthesis of lipid A, a phosphorylated glycolipid that anchors the lipopolysaccharide to the outer membrane of the cell. This chain is Acyl-[acyl-carrier-protein]--UDP-N-acetylglucosamine O-acyltransferase, found in Azotobacter vinelandii (strain DJ / ATCC BAA-1303).